The chain runs to 268 residues: Indole-3-glycerol phosphate synthase (268 aa).

Belongs to the TrpC family.

It carries out the reaction 1-(2-carboxyphenylamino)-1-deoxy-D-ribulose 5-phosphate + H(+) = (1S,2R)-1-C-(indol-3-yl)glycerol 3-phosphate + CO2 + H2O. The protein operates within amino-acid biosynthesis; L-tryptophan biosynthesis; L-tryptophan from chorismate: step 4/5. The polypeptide is Indole-3-glycerol phosphate synthase (Acinetobacter baumannii (strain SDF)).